Consider the following 1878-residue polypeptide: DNA polymerase (1878 aa).

2 disordered regions span residues 691 to 727 (LFQA…KGPN) and 1839 to 1878 (TQDD…GTMF). Over residues 694–709 (ADDDDDDDDEDEDDGL) the composition is skewed to acidic residues. Residues 710–723 (LDERQQDSAEDMKK) are compositionally biased toward basic and acidic residues. A compositionally biased stretch (low complexity) spans 1868–1878 (ITAGKTAGTMF).

It belongs to the DNA polymerase type-B family.

The enzyme catalyses DNA(n) + a 2'-deoxyribonucleoside 5'-triphosphate = DNA(n+1) + diphosphate. The polypeptide is DNA polymerase (Magallana gigas (Pacific oyster)).